Here is a 750-residue protein sequence, read N- to C-terminus: DDT domain-containing protein DDR4 (750 aa).

A disordered region spans residues 1-125 (MGSSSDIVPD…ITSLVPPPEP (125 aa)). Low complexity predominate over residues 45-54 (RAQQRLQELQ). Residues 55-77 (AAERKLKPPKKEYKREQHRRREE) show a composition bias toward basic and acidic residues. Acidic residues predominate over residues 78-100 (VVEEDEDSEDDDQEDEENDGDDE). A DDT domain is found at 133-192 (LRSMWELASVLNFLHVFRPLLKINAEFSAEEFETALLTPNDTLSDIHIPLLKAIPPVTRM). 2 disordered regions span residues 450-505 (NGRS…TDFV) and 532-750 (LKKR…TDNS). Residues 451–471 (GRSTSSTHPTEPVNDTASGRS) show a composition bias toward polar residues. Acidic residues predominate over residues 545 to 585 (EGDEEKGDEEYKWDEDNAEYEEEEEEEEEEDSLSASEEDSD). Positions 595 to 606 (RRETKLRSRSND) are enriched in basic and acidic residues. Residues 688-707 (NADTTNGKENNQLNKSNGTT) show a composition bias toward polar residues. Over residues 741–750 (LKDDDKTDNS) the composition is skewed to basic and acidic residues.

As to quaternary structure, interacts (via the DDT domain) with CHR11 (via C-terminus).

The protein resides in the nucleus. Probable transcription regulator. The protein is DDT domain-containing protein DDR4 of Arabidopsis thaliana (Mouse-ear cress).